A 422-amino-acid chain; its full sequence is MSLTQGMKAKQLLAYFQGKADQDAREAKARGELVCWSASVAPPEFCVTMGIAMIYPETHAAGIGARKGAMDMLEVADRKGYNVDCCSYGRVNMGYMECLKEAAITGVKPEVLVNSPAADVPLPDLVITCNNICNTLLKWYENLAAELDIPCIVIDVPFNHTMPIPEYAKAYIADQFRNAISQLEVICGRPFDWKKFKEVKDQTQRSVYHWNRIAEMAKYKPSPLNGFDLFNYMALIVACRSLDYAEITFKAFADELEENLKAGIYAFKGAEKTRFQWEGIAVWPHLGHTFKSMKNLNSIMTGTAYPALWDLHYDANDESMHSMAEAYTRIYINTCLQNKVEVLLGIMEKGQVDGTVYHLNRSCKLMSFLNVETAEIIKEKNGLPYVSIDGDQTDPRVFSPAQFDTRVQALVEMMEANMAAAE.

It belongs to the FldB/FldC dehydratase alpha/beta subunit family. In terms of assembly, heterodimer of an alpha (LcdA) and a beta (LcdB) subunit. It depends on [4Fe-4S] cluster as a cofactor. FMN serves as cofactor. Requires riboflavin as cofactor. The cofactor is Mg(2+).

It catalyses the reaction (R)-lactoyl-CoA = acryloyl-CoA + H2O. The enzyme catalyses (2R)-hydroxybutanoyl-CoA = (2E)-butenoyl-CoA + H2O. Activated by the LcdC protein. Functionally, involved in the acrylate pathway for the conversion of D-lactic acid to propionic acid. Catalyzes the reversible dehydration of Lactoyl-CoA and 2-hydroxybutyroyl-CoA to acryloyl-CoA and crotonyl-CoA, respectively. The sequence is that of Lactoyl-CoA dehydratase subunit alpha (lcdA) from Anaerotignum propionicum (Clostridium propionicum).